Reading from the N-terminus, the 83-residue chain is CDC42 small effector protein 2 (83 aa).

2 S-palmitoyl cysteine lipidation sites follow: cysteine 10 and cysteine 11. Residues 28 to 41 enclose the CRIB domain; that stretch reads IGEPTNFVHTAHVG. Residues serine 42 and serine 51 each carry the phosphoserine modification.

It belongs to the CDC42SE/SPEC family. As to quaternary structure, interacts with CDC42 (in GTP-bound form). Interacts weakly with RAC1 and not at all with RHOA.

The protein resides in the cytoplasm. Its subcellular location is the cytoskeleton. It localises to the cell membrane. It is found in the cell projection. The protein localises to the phagocytic cup. Functionally, probably involved in the organization of the actin cytoskeleton by acting downstream of CDC42, inducing actin filament assembly. Alters CDC42-induced cell shape changes. In activated T-cells, may play a role in CDC42-mediated F-actin accumulation at the immunological synapse. May play a role in early contractile events in phagocytosis in macrophages. The polypeptide is CDC42 small effector protein 2 (Cdc42se2) (Rattus norvegicus (Rat)).